A 384-amino-acid polypeptide reads, in one-letter code: 5-cytosine rRNA methyltransferase NSUN4 (384 aa).

The transit peptide at 1–25 (MAALTLRGVRELLKRVDLATVPRRH) directs the protein to the mitochondrion. Residues Gly-185, Gly-186, Lys-187, and Asp-204 each coordinate S-adenosyl-L-methionine. Position 206 is a phosphoserine (Ser-206). 4 residues coordinate S-adenosyl-L-methionine: Arg-209, Asp-237, Gly-238, and Asp-255. Cys-310 (nucleophile) is an active-site residue.

This sequence belongs to the class I-like SAM-binding methyltransferase superfamily. RsmB/NOP family. As to quaternary structure, heterodimer with MTERFD2/MTERF4; this interaction seems to be required for NSUN4 recruitment to the mitochondrial large ribosomal subunit.

The protein resides in the mitochondrion. The enzyme catalyses a cytidine in rRNA + S-adenosyl-L-methionine = a 5-methylcytidine in rRNA + S-adenosyl-L-homocysteine + H(+). It carries out the reaction a cytidine in mRNA + S-adenosyl-L-methionine = a 5-methylcytidine in mRNA + S-adenosyl-L-homocysteine + H(+). Mitochondrial RNA cytosine C(5)-methyltransferase that methylates cytosine to 5-methylcytosine (m5C) in various RNAs, such as rRNAs, mRNAs and some long non-coding RNAs (lncRNAs). Involved in mitochondrial ribosome small subunit (SSU) maturation by catalyzing methylation of mitochondrial 12S rRNA; the function is independent of MTERFD2/MTERF4 and assembled mitochondrial ribosome large subunit (LSU). Targeted to LSU by MTERFD2/MTERF4 and probably is involved in a final step in ribosome biogenesis to ensure that SSU and LSU are assembled. In vitro can methylate 16S rRNA of the LSU; the methylation is enhanced by MTERFD/MTERF4. Also acts as a regulator of innate immunity by marking double-stranded mitochondrial RNAs(mt-dsRNAs) generated in response to stress: catalyzes m5C modification on mitochondrial RNAs, such as a mRNAs and lncRNAs, with a preference for the termini of light-strand lncRNAs, promoting their degradation and cytosolic release. Modified light-strand lncRNAs are then recognized by C1QBP reader and recruited to the mitochondrial degradosome complex, which promotes their degradation. The protein is 5-cytosine rRNA methyltransferase NSUN4 of Homo sapiens (Human).